The sequence spans 445 residues: tRNA-2-methylthio-N(6)-dimethylallyladenosine synthase (445 aa).

Residues arginine 3–serine 120 enclose the MTTase N-terminal domain. The [4Fe-4S] cluster site is built by cysteine 12, cysteine 49, cysteine 83, cysteine 157, cysteine 161, and cysteine 164. Residues serine 143–aspartate 375 enclose the Radical SAM core domain. In terms of domain architecture, TRAM spans arginine 378 to arginine 442.

Belongs to the methylthiotransferase family. MiaB subfamily. As to quaternary structure, monomer. The cofactor is [4Fe-4S] cluster.

The protein resides in the cytoplasm. It catalyses the reaction N(6)-dimethylallyladenosine(37) in tRNA + (sulfur carrier)-SH + AH2 + 2 S-adenosyl-L-methionine = 2-methylsulfanyl-N(6)-dimethylallyladenosine(37) in tRNA + (sulfur carrier)-H + 5'-deoxyadenosine + L-methionine + A + S-adenosyl-L-homocysteine + 2 H(+). Catalyzes the methylthiolation of N6-(dimethylallyl)adenosine (i(6)A), leading to the formation of 2-methylthio-N6-(dimethylallyl)adenosine (ms(2)i(6)A) at position 37 in tRNAs that read codons beginning with uridine. The polypeptide is tRNA-2-methylthio-N(6)-dimethylallyladenosine synthase (Alcanivorax borkumensis (strain ATCC 700651 / DSM 11573 / NCIMB 13689 / SK2)).